Here is a 328-residue protein sequence, read N- to C-terminus: tRNA uridine(34) hydroxylase (328 aa).

The 95-residue stretch at 130–224 (LDKDTVVLDT…YGKDPEVQGE (95 aa)) folds into the Rhodanese domain. Cys184 functions as the Cysteine persulfide intermediate in the catalytic mechanism.

This sequence belongs to the TrhO family.

It carries out the reaction uridine(34) in tRNA + AH2 + O2 = 5-hydroxyuridine(34) in tRNA + A + H2O. In terms of biological role, catalyzes oxygen-dependent 5-hydroxyuridine (ho5U) modification at position 34 in tRNAs. This is tRNA uridine(34) hydroxylase from Streptococcus pneumoniae (strain ATCC 700669 / Spain 23F-1).